Here is a 37-residue protein sequence, read N- to C-terminus: Large ribosomal subunit protein bL36 (37 aa).

The protein belongs to the bacterial ribosomal protein bL36 family.

The chain is Large ribosomal subunit protein bL36 from Francisella tularensis subsp. mediasiatica (strain FSC147).